Here is an 860-residue protein sequence, read N- to C-terminus: Leucine--tRNA ligase (860 aa).

A 'HIGH' region motif is present at residues 42 to 52 (PYPSGRLHMGH). The short motif at 619–623 (KMSKS) is the 'KMSKS' region element. K622 contacts ATP.

Belongs to the class-I aminoacyl-tRNA synthetase family.

It is found in the cytoplasm. It catalyses the reaction tRNA(Leu) + L-leucine + ATP = L-leucyl-tRNA(Leu) + AMP + diphosphate. This is Leucine--tRNA ligase from Yersinia enterocolitica serotype O:8 / biotype 1B (strain NCTC 13174 / 8081).